We begin with the raw amino-acid sequence, 171 residues long: Adenine phosphoribosyltransferase (171 aa).

This sequence belongs to the purine/pyrimidine phosphoribosyltransferase family. In terms of assembly, homodimer.

The protein localises to the cytoplasm. It catalyses the reaction AMP + diphosphate = 5-phospho-alpha-D-ribose 1-diphosphate + adenine. It participates in purine metabolism; AMP biosynthesis via salvage pathway; AMP from adenine: step 1/1. Its function is as follows. Catalyzes a salvage reaction resulting in the formation of AMP, that is energically less costly than de novo synthesis. This is Adenine phosphoribosyltransferase from Acetivibrio thermocellus (strain ATCC 27405 / DSM 1237 / JCM 9322 / NBRC 103400 / NCIMB 10682 / NRRL B-4536 / VPI 7372) (Clostridium thermocellum).